A 326-amino-acid chain; its full sequence is ATP synthase gamma chain (326 aa).

It belongs to the ATPase gamma chain family. F-type ATPases have 2 components, CF(1) - the catalytic core - and CF(0) - the membrane proton channel. CF(1) has five subunits: alpha(3), beta(3), gamma(1), delta(1), epsilon(1). CF(0) has three main subunits: a, b and c.

Its subcellular location is the cell membrane. In terms of biological role, produces ATP from ADP in the presence of a proton gradient across the membrane. The gamma chain is believed to be important in regulating ATPase activity and the flow of protons through the CF(0) complex. In Corynebacterium jeikeium (strain K411), this protein is ATP synthase gamma chain.